The following is an 862-amino-acid chain: Leucine--tRNA ligase (862 aa).

The 'HIGH' region motif lies at 49 to 59; it reads PYPSGRIHMGH. A 'KMSKS' region motif is present at residues 625–629; it reads KMSKS. Lys628 contacts ATP.

Belongs to the class-I aminoacyl-tRNA synthetase family.

The protein localises to the cytoplasm. The enzyme catalyses tRNA(Leu) + L-leucine + ATP = L-leucyl-tRNA(Leu) + AMP + diphosphate. The sequence is that of Leucine--tRNA ligase from Paramagnetospirillum magneticum (strain ATCC 700264 / AMB-1) (Magnetospirillum magneticum).